The primary structure comprises 389 residues: Alpha carbonic anhydrase 8 (389 aa).

An N-terminal signal peptide occupies residues 1–22 (MKISSLGWVLVLIFISITIVSS). The tract at residues 21 to 153 (SSAPAPKPPK…TKGNKGPAKW (133 aa)) is disordered. Residues 25–129 (APKPPKPKPA…PKPKPAPKPA (105 aa)) show a composition bias toward pro residues. Positions 138 to 374 (TEFSYETKGN…VNKRKVYLYK (237 aa)) constitute an Alpha-carbonic anhydrase domain. A disulfide bond links C163 and C324. N196 carries N-linked (GlcNAc...) asparagine glycosylation. The Proton acceptor role is filled by H204. H232, H234, and H251 together coordinate Zn(2+). 320-321 (TA) provides a ligand contact to substrate. N385 carries an N-linked (GlcNAc...) asparagine glycan.

This sequence belongs to the alpha-class carbonic anhydrase family. It depends on Zn(2+) as a cofactor. In terms of processing, N-glycosylated.

The protein resides in the plastid. It is found in the chloroplast stroma. The enzyme catalyses hydrogencarbonate + H(+) = CO2 + H2O. Its function is as follows. Reversible hydration of carbon dioxide. The sequence is that of Alpha carbonic anhydrase 8 (ACA8) from Arabidopsis thaliana (Mouse-ear cress).